Here is a 390-residue protein sequence, read N- to C-terminus: GPI inositol-deacylase (390 aa).

A helical transmembrane segment spans residues 21 to 41 (FIVYFIICLTIIISALGVYLY). Residue S202 is part of the active site. A helical membrane pass occupies residues 354–374 (VHLLSLTIFALKWTIIVLAII).

The protein belongs to the GPI inositol-deacylase family.

It is found in the endoplasmic reticulum membrane. Involved in inositol deacylation of GPI-anchored proteins which plays important roles in the quality control and ER-associated degradation of GPI-anchored proteins. The chain is GPI inositol-deacylase (BST1) from Candida albicans (strain SC5314 / ATCC MYA-2876) (Yeast).